Reading from the N-terminus, the 224-residue chain is Thylakoid lumenal 15 kDa protein 1, chloroplastic (224 aa).

Residues 1 to 34 (MVILSNVSLFSCCNISQKPSLFSPSSRSSHCPIR) constitute a chloroplast transit peptide. The N-terminal 47 residues, 35-81 (CSQSQEGKEVVTSPLRSVVWSLGEEVSKRSLFALVSASLFFVDPALA), are a transit peptide targeting the thylakoid. 2 consecutive Pentapeptide repeat domains span residues 116-155 (SILRQANFKGAKLLGASFFDADLTGADLSEADLRGADFSL) and 156-196 (ANVT…PLRD).

Its subcellular location is the plastid. It is found in the chloroplast thylakoid lumen. In Arabidopsis thaliana (Mouse-ear cress), this protein is Thylakoid lumenal 15 kDa protein 1, chloroplastic.